The primary structure comprises 357 residues: DNA integrity scanning protein DisA (357 aa).

Residues 9-147 (DRKLLEILKT…DDIKYILRDS (139 aa)) form the DAC domain. ATP-binding positions include G76, L94, and 107 to 111 (TRHRT).

It belongs to the DisA family. As to quaternary structure, homooctamer. The cofactor is Mg(2+).

It catalyses the reaction 2 ATP = 3',3'-c-di-AMP + 2 diphosphate. In terms of biological role, participates in a DNA-damage check-point that is active prior to asymmetric division when DNA is damaged. DisA forms globular foci that rapidly scan along the chromosomes during sporulation, searching for lesions. When a lesion is present, DisA pauses at the lesion site. This triggers a cellular response that culminates in a temporary block in sporulation initiation. Functionally, also has diadenylate cyclase activity, catalyzing the condensation of 2 ATP molecules into cyclic di-AMP (c-di-AMP). c-di-AMP acts as a signaling molecule that couples DNA integrity with progression of sporulation. The rise in c-di-AMP level generated by DisA while scanning the chromosome, operates as a positive signal that advances sporulation; upon encountering a lesion, the DisA focus arrests at the damaged site and halts c-di-AMP synthesis. The sequence is that of DNA integrity scanning protein DisA from Clostridium acetobutylicum (strain ATCC 824 / DSM 792 / JCM 1419 / IAM 19013 / LMG 5710 / NBRC 13948 / NRRL B-527 / VKM B-1787 / 2291 / W).